The primary structure comprises 499 residues: Probable malate:quinone oxidoreductase (499 aa).

This sequence belongs to the MQO family. The cofactor is FAD.

It catalyses the reaction (S)-malate + a quinone = a quinol + oxaloacetate. It participates in carbohydrate metabolism; tricarboxylic acid cycle; oxaloacetate from (S)-malate (quinone route): step 1/1. This Exiguobacterium sp. (strain ATCC BAA-1283 / AT1b) protein is Probable malate:quinone oxidoreductase.